The primary structure comprises 377 residues: Tryptophan--tRNA ligase, mitochondrial (377 aa).

ATP contacts are provided by residues glutamine 21 and 28–31; that span reads HLGN. The 'HIGH' region signature appears at 22 to 31; that stretch reads PTSSALHLGN. Residue aspartate 181 coordinates L-tryptophan. ATP contacts are provided by residues 193–195, 242–246, and lysine 245; these read GED and KMSKS. The 'KMSKS' region motif lies at 242-246; sequence KMSKS.

Belongs to the class-I aminoacyl-tRNA synthetase family.

Its subcellular location is the mitochondrion matrix. It carries out the reaction tRNA(Trp) + L-tryptophan + ATP = L-tryptophyl-tRNA(Trp) + AMP + diphosphate + H(+). In Dictyostelium discoideum (Social amoeba), this protein is Tryptophan--tRNA ligase, mitochondrial (wars2).